We begin with the raw amino-acid sequence, 632 residues long: Golgin subfamily A member 8H (632 aa).

Residues 1–77 (MAEETQHNKL…SSATLKDLES (77 aa)) are disordered. Coiled-coil stretches lie at residues 110 to 201 (VEHQ…LSSR) and 240 to 468 (ECAE…EKAD). Composition is skewed to basic and acidic residues over residues 352–362 (KQEERIQEQHK) and 427–440 (HGGE…EEAP). Disordered stretches follow at residues 352 to 379 (KQEE…EPNN), 423 to 452 (PGEG…DPES), and 496 to 524 (LSEP…DEGE). A compositionally biased stretch (gly residues) spans 508-520 (LGGGHHQAGAQGG).

It belongs to the GOLGA8 family.

This Homo sapiens (Human) protein is Golgin subfamily A member 8H (GOLGA8H).